The chain runs to 432 residues: ATP-dependent RNA helicase RhlB (432 aa).

A Q motif motif is present at residues 9 to 37; the sequence is QNFADLGLQPQVIDGLNAKGFIKCTPIQA. The Helicase ATP-binding domain maps to 40 to 219; the sequence is LPVLLAGQDI…FEHMQEPEHV (180 aa). An ATP-binding site is contributed by 53–60; the sequence is AQTGTGKT. The DEAD box signature appears at 165-168; sequence DEAD. Residues 245–390 form the Helicase C-terminal domain; that stretch reads ALLQTLIEEE…QSDYDASALL (146 aa). A disordered region spans residues 396 to 432; sequence PLRLQRRPQQNRRNNNGQRQGGNRKHTRPRQPRNTQS. Over residues 417–426 the composition is skewed to basic residues; the sequence is GNRKHTRPRQ.

It belongs to the DEAD box helicase family. RhlB subfamily. Component of the RNA degradosome, which is a multiprotein complex involved in RNA processing and mRNA degradation.

It is found in the cytoplasm. The catalysed reaction is ATP + H2O = ADP + phosphate + H(+). Functionally, DEAD-box RNA helicase involved in RNA degradation. Has RNA-dependent ATPase activity and unwinds double-stranded RNA. The sequence is that of ATP-dependent RNA helicase RhlB from Aliivibrio fischeri (strain ATCC 700601 / ES114) (Vibrio fischeri).